The following is a 396-amino-acid chain: Beta-1,3-N-acetylglucosaminyltransferase radical fringe (396 aa).

Residues 1–6 lie on the Cytoplasmic side of the membrane; the sequence is MNFSCL. Residues 7–27 traverse the membrane as a helical; Signal-anchor for type II membrane protein segment; that stretch reads GLSKICFLVSVIFCTFLLLFI. Topologically, residues 28–396 are lumenal; it reads PKTKTPWRPR…THWCPPRKTR (369 aa). N-linked (GlcNAc...) asparagine glycosylation is found at N49 and N120. R145 contributes to the substrate binding site. N184 carries an N-linked (GlcNAc...) asparagine glycan. 2 cysteine pairs are disulfide-bonded: C185–C196 and C214–C277. Position 218 (D218) interacts with substrate. D219 is a binding site for Mn(2+). D307 is an active-site residue. H331 provides a ligand contact to Mn(2+). A disulfide bridge links C381 with C390.

Belongs to the glycosyltransferase 31 family. The cofactor is Mn(2+). In terms of tissue distribution, detected in the mesanchymal region of the developing limb. Expressed in mesoderm but not in ectoderm with no evident boundary of expression.

The protein resides in the golgi apparatus membrane. The enzyme catalyses 3-O-(alpha-L-fucosyl)-L-threonyl-[EGF-like domain protein] + UDP-N-acetyl-alpha-D-glucosamine = 3-O-(N-acetyl-beta-D-glucosaminyl-(1-&gt;3)-alpha-L-fucosyl)-L-threonyl-[EGF-like domain protein] + UDP + H(+). It carries out the reaction 3-O-(alpha-L-fucosyl)-L-seryl-[EGF-like domain protein] + UDP-N-acetyl-alpha-D-glucosamine = 3-O-(N-acetyl-beta-D-glucosaminyl-(1-&gt;3)-alpha-L-fucosyl)-L-seryl-[EGF-like domain protein] + UDP + H(+). In terms of biological role, glycosyltransferase that initiates the elongation of O-linked fucose residues attached to EGF-like repeats in the extracellular domain of Notch molecules. Involved in forelimb development and in adult forelimb regeneration. This is Beta-1,3-N-acetylglucosaminyltransferase radical fringe (RFNG) from Notophthalmus viridescens (Eastern newt).